Here is a 200-residue protein sequence, read N- to C-terminus: NADH-quinone oxidoreductase subunit I (200 aa).

4Fe-4S ferredoxin-type domains lie at 73-102 (RLLE…METT) and 112-141 (LNYS…HGGD). The [4Fe-4S] cluster site is built by C82, C85, C88, C92, C121, C124, C127, and C131.

The protein belongs to the complex I 23 kDa subunit family. NDH-1 is composed of 14 different subunits. Subunits NuoA, H, J, K, L, M, N constitute the membrane sector of the complex. Requires [4Fe-4S] cluster as cofactor.

It localises to the cell inner membrane. It carries out the reaction a quinone + NADH + 5 H(+)(in) = a quinol + NAD(+) + 4 H(+)(out). NDH-1 shuttles electrons from NADH, via FMN and iron-sulfur (Fe-S) centers, to quinones in the respiratory chain. The immediate electron acceptor for the enzyme in this species is believed to be ubiquinone. Couples the redox reaction to proton translocation (for every two electrons transferred, four hydrogen ions are translocated across the cytoplasmic membrane), and thus conserves the redox energy in a proton gradient. This Campylobacter hominis (strain ATCC BAA-381 / DSM 21671 / CCUG 45161 / LMG 19568 / NCTC 13146 / CH001A) protein is NADH-quinone oxidoreductase subunit I.